The primary structure comprises 253 residues: uncharacterized protein (253 aa).

Positions 1–25 (MRKKKFLSKVSFGSLFLLCGTVLSA) are cleaved as a signal peptide. Residue C26 is the site of N-palmitoyl cysteine attachment. C26 is lipidated: S-diacylglycerol cysteine.

It belongs to the MG439/MG440 family.

Its subcellular location is the cell membrane. This is an uncharacterized protein from Mycoplasma pneumoniae (strain ATCC 29342 / M129 / Subtype 1) (Mycoplasmoides pneumoniae).